Consider the following 271-residue polypeptide: Phosphatidylinositol transfer protein beta isoform (271 aa).

K215 is modified (N6-acetyllysine). S262 carries the phosphoserine modification.

Belongs to the PtdIns transfer protein family. PI transfer class I subfamily. Constitutive phosphorylation of Ser-262 has no effect on phospholipid transfer activity but is required for Golgi targeting.

It is found in the golgi apparatus. Its subcellular location is the golgi apparatus membrane. The protein resides in the endoplasmic reticulum membrane. The catalysed reaction is a 1,2-diacyl-sn-glycero-3-phosphocholine(in) = a 1,2-diacyl-sn-glycero-3-phosphocholine(out). It catalyses the reaction a 1,2-diacyl-sn-glycero-3-phospho-(1D-myo-inositol)(in) = a 1,2-diacyl-sn-glycero-3-phospho-(1D-myo-inositol)(out). It carries out the reaction an N-(acyl)-sphingosylphosphocholine(in) = an N-(acyl)-sphingosylphosphocholine(out). In terms of biological role, catalyzes the transfer of phosphatidylinositol, phosphatidylcholine and sphingomyelin between membranes. Required for COPI-mediated retrograde transport from the Golgi to the endoplasmic reticulum; phosphatidylinositol and phosphatidylcholine transfer activity is essential for this function. This is Phosphatidylinositol transfer protein beta isoform (PITPNB) from Bos taurus (Bovine).